The primary structure comprises 345 residues: Putative membrane protein ORF59 (345 aa).

The next 4 membrane-spanning stretches (helical) occupy residues 46-63 (LVFAYVTLVLLYVIMMLI), 101-118 (IVFVALGVNFLLVILVFL), 147-165 (IFGIMSFIFVFIITVFSIL), and 265-286 (VVPVILLVMFILYMFLHLWMVI).

It localises to the membrane. This Ictalurid herpesvirus 1 (strain Auburn) (IcHV-1) protein is Putative membrane protein ORF59 (ORF59).